The following is an 885-amino-acid chain: Alanine--tRNA ligase (885 aa).

Residues His-574, His-578, Cys-676, and His-680 each coordinate Zn(2+).

The protein belongs to the class-II aminoacyl-tRNA synthetase family. Requires Zn(2+) as cofactor.

The protein localises to the cytoplasm. The enzyme catalyses tRNA(Ala) + L-alanine + ATP = L-alanyl-tRNA(Ala) + AMP + diphosphate. Catalyzes the attachment of alanine to tRNA(Ala) in a two-step reaction: alanine is first activated by ATP to form Ala-AMP and then transferred to the acceptor end of tRNA(Ala). Also edits incorrectly charged Ser-tRNA(Ala) and Gly-tRNA(Ala) via its editing domain. This Syntrophobacter fumaroxidans (strain DSM 10017 / MPOB) protein is Alanine--tRNA ligase.